Here is a 349-residue protein sequence, read N- to C-terminus: tRNA pseudouridine synthase D (349 aa).

A substrate-binding site is contributed by Phe-27. Asp-80 functions as the Nucleophile in the catalytic mechanism. Substrate is bound at residue Asn-129. A TRUD domain is found at 155–303; it reads GVPNYFGAQR…VEAARRAMLL (149 aa). Phe-329 contributes to the substrate binding site.

This sequence belongs to the pseudouridine synthase TruD family.

The enzyme catalyses uridine(13) in tRNA = pseudouridine(13) in tRNA. In terms of biological role, responsible for synthesis of pseudouridine from uracil-13 in transfer RNAs. This chain is tRNA pseudouridine synthase D, found in Escherichia coli (strain SE11).